The primary structure comprises 211 residues: Octanoyltransferase (211 aa).

The BPL/LPL catalytic domain maps to Gly-28–Leu-203. Residues Arg-66–His-73, Ser-133–Gly-135, and Gly-146–Ala-148 contribute to the substrate site. Cys-164 functions as the Acyl-thioester intermediate in the catalytic mechanism.

The protein belongs to the LipB family.

Its subcellular location is the cytoplasm. The catalysed reaction is octanoyl-[ACP] + L-lysyl-[protein] = N(6)-octanoyl-L-lysyl-[protein] + holo-[ACP] + H(+). The protein operates within protein modification; protein lipoylation via endogenous pathway; protein N(6)-(lipoyl)lysine from octanoyl-[acyl-carrier-protein]: step 1/2. Functionally, catalyzes the transfer of endogenously produced octanoic acid from octanoyl-acyl-carrier-protein onto the lipoyl domains of lipoate-dependent enzymes. Lipoyl-ACP can also act as a substrate although octanoyl-ACP is likely to be the physiological substrate. This Syntrophotalea carbinolica (strain DSM 2380 / NBRC 103641 / GraBd1) (Pelobacter carbinolicus) protein is Octanoyltransferase.